Consider the following 130-residue polypeptide: MSRVRTKTVKKASRVLIEKYYTRMTNDFHNNKRVCDEVAIIGSKPLRNKIAGYITHLMRRIERGPVRGISIKLQEEERERRDNYMPEISTVDPSQLTSIKVDTDTSDMLKAAGFNLPNVTVEDQGKNKGK.

Residues 74-84 are compositionally biased toward basic and acidic residues; it reads QEEERERRDNY. The segment at 74–97 is disordered; that stretch reads QEEERERRDNYMPEISTVDPSQLT.

The protein belongs to the eukaryotic ribosomal protein eS17 family.

The polypeptide is Small ribosomal subunit protein eS17 (rps-17) (Caenorhabditis elegans).